Here is a 1452-residue protein sequence, read N- to C-terminus: Protein clueless (1452 aa).

2 disordered regions span residues 1 to 93 (MALE…SNGH) and 266 to 288 (KKTRPDSVDCTPPEYVTPGVSEP). The span at 8 to 24 (KNSNATATSDATATKAS) shows a compositional bias: low complexity. Residues 42–59 (PIPNSNHQNSNQNLVNGN) show a composition bias toward polar residues. Residues 68–77 (AKKKGKKNRN) show a composition bias toward basic residues. Serine 272 carries the phosphoserine modification. The region spanning 426–668 (RAEDAFSSKL…RTFPPDVNFL (243 aa)) is the Clu domain. Disordered regions lie at residues 726–775 (KQSE…GDTK), 962–1013 (AVSS…SSVS), and 1414–1452 (ANNNGEAEDAVPKDVEEQKEAGTQLTNGEKAAATEATSS). Residues 750–766 (GADKTDVKEEKNEENEK) show a composition bias toward basic and acidic residues. The segment covering 970-985 (KKRGNGGKHNKHKSSK) has biased composition (basic residues). The span at 990–1013 (QQQQQATGNQNGSSSGSSNGSSVS) shows a compositional bias: low complexity. Residues 1423 to 1433 (AVPKDVEEQKE) are compositionally biased toward basic and acidic residues.

This sequence belongs to the CLU family.

The protein localises to the cytoplasm. MRNA-binding protein involved in proper cytoplasmic distribution of mitochondria. This chain is Protein clueless, found in Drosophila erecta (Fruit fly).